A 1820-amino-acid chain; its full sequence is Kinesin-like protein KIF20B (1820 aa).

The Kinesin motor domain maps to 58-479 (YLQVCLRIRP…LKFSAIAQKV (422 aa)). 152 to 159 (GLTNSGKT) provides a ligand contact to ATP. Phosphoserine is present on Ser488. Coiled coils occupy residues 523 to 603 (ENSL…KIRE) and 674 to 793 (GFED…MENT). Residue Thr560 is modified to Phosphothreonine. The tract at residues 829-866 (SERKRVNENELQQDEPPAKKGSIHVSSAITEDQKKSEE) is disordered. At Ser997 the chain carries Phosphoserine. Residues 1050–1107 (ENSFHSSIEAIWEECKEIVKASSKKSHQIEELEQQIEKLQAEVKGYKDENNRLKEKEH) form a necessary and sufficient for interaction with SHTN1 region. Basic and acidic residues predominate over residues 1247-1264 (EEEEETNRQETEKLKEEL). The segment at 1247–1275 (EEEEETNRQETEKLKEELSASSARTQNLK) is disordered. A compositionally biased stretch (polar residues) spans 1265-1274 (SASSARTQNL). The interaction with PIN1 stretch occupies residues 1560–1820 (IETQIMDIKP…KRRLRTKTAK (261 aa)). Ser1588 carries the post-translational modification Phosphoserine. At Thr1644 the chain carries Phosphothreonine; by CDK1. Ser1658, Ser1715, and Ser1740 each carry phosphoserine. Positions 1760–1772 (LSNVEASKENVSQ) are enriched in polar residues. The tract at residues 1760–1781 (LSNVEASKENVSQPKRAKRKLY) is disordered.

This sequence belongs to the TRAFAC class myosin-kinesin ATPase superfamily. Kinesin family. As to quaternary structure, oligomerizes (via kinesin motor domain). Associates with microtubules. Interacts (via C-terminal globular tail region) with PIN1 (via WW domain). Interacts with PRC1. Interacts with SHTN1 (via N-terminus); the interaction is direct and promotes the association of SHTN1 to microtubules in primary neurons. In terms of processing, phosphorylated during mitosis by CDK1. Brain, ovary, kidney and testis (at protein level). Overexpressed in bladder cancer cells (at protein level). Expressed in testis. Overexpressed in bladder cancer cells.

It is found in the nucleus. Its subcellular location is the cytoplasm. The protein localises to the cytoskeleton. It localises to the microtubule organizing center. The protein resides in the centrosome. It is found in the nucleolus. Its subcellular location is the nucleoplasm. The protein localises to the spindle. It localises to the spindle pole. The protein resides in the midbody. It is found in the cell projection. Its subcellular location is the axon. The protein localises to the growth cone. Functionally, plus-end-directed motor enzyme that is required for completion of cytokinesis. Required for proper midbody organization and abscission in polarized cortical stem cells. Plays a role in the regulation of neuronal polarization by mediating the transport of specific cargos. Participates in the mobilization of SHTN1 and in the accumulation of PIP3 in the growth cone of primary hippocampal neurons in a tubulin and actin-dependent manner. In the developing telencephalon, cooperates with SHTN1 to promote both the transition from the multipolar to the bipolar stage and the radial migration of cortical neurons from the ventricular zone toward the superficial layer of the neocortex. Involved in cerebral cortex growth. Acts as an oncogene for promoting bladder cancer cells proliferation, apoptosis inhibition and carcinogenic progression. The polypeptide is Kinesin-like protein KIF20B (Homo sapiens (Human)).